We begin with the raw amino-acid sequence, 305 residues long: MSWIERILNKSNITPTRKANIPEGVWTKCDSCGQVLYRAELERNLGVCPKCDHHMRLSARARLQAFLDKENTVELGSELEPKDVLKFRDSKKYKDRLVSAQKQSDEKDAMVVMKGTLYGMPIVVASFEFAFMGGSMASVVGARFVRAVEQALEDGCPLVCFSASGGARMQEALMSLMQMAKTSAALAKMRERGLPYISVLTDPTMGGVSASLAMLGDLNIAEPKALIGFAGPRVIEQTVREKLPPGFQRSEFLIEKGAIDMIVRRPEMRYKVATLLAKLTNHPEPGNDDVEIRSDAPSESSQDDA.

Residues 25 to 294 (VWTKCDSCGQ…PGNDDVEIRS (270 aa)) form the CoA carboxyltransferase N-terminal domain. Positions 29, 32, 48, and 51 each coordinate Zn(2+). Residues 29 to 51 (CDSCGQVLYRAELERNLGVCPKC) form a C4-type zinc finger. The segment at 281-305 (NHPEPGNDDVEIRSDAPSESSQDDA) is disordered.

This sequence belongs to the AccD/PCCB family. As to quaternary structure, acetyl-CoA carboxylase is a heterohexamer composed of biotin carboxyl carrier protein (AccB), biotin carboxylase (AccC) and two subunits each of ACCase subunit alpha (AccA) and ACCase subunit beta (AccD). It depends on Zn(2+) as a cofactor.

It localises to the cytoplasm. The catalysed reaction is N(6)-carboxybiotinyl-L-lysyl-[protein] + acetyl-CoA = N(6)-biotinyl-L-lysyl-[protein] + malonyl-CoA. Its pathway is lipid metabolism; malonyl-CoA biosynthesis; malonyl-CoA from acetyl-CoA: step 1/1. In terms of biological role, component of the acetyl coenzyme A carboxylase (ACC) complex. Biotin carboxylase (BC) catalyzes the carboxylation of biotin on its carrier protein (BCCP) and then the CO(2) group is transferred by the transcarboxylase to acetyl-CoA to form malonyl-CoA. This Pectobacterium atrosepticum (strain SCRI 1043 / ATCC BAA-672) (Erwinia carotovora subsp. atroseptica) protein is Acetyl-coenzyme A carboxylase carboxyl transferase subunit beta.